Consider the following 384-residue polypeptide: Cytochrome b (384 aa).

A run of 4 helical transmembrane segments spans residues 33–53 (YGSLLFLCLIIQIATGLFLAM), 77–98 (WLIRNMHANGASFFFICLYLHI), 113–133 (WNVGVILFLLVMMTAFVGYVL), and 178–198 (FFAFHFLFPFVIAAAAVIHLL). His-83 and His-97 together coordinate heme b. Residues His-182 and His-196 each coordinate heme b. His-201 provides a ligand contact to a ubiquinone. 4 helical membrane passes run 226–246 (YKDLLGFALMLLALTSLALFT), 288–308 (LGGVLALLFSILVLMVVPILH), 320–340 (LSQMLFWTLVADVLILTWIGG), and 347–367 (FIIIGQVASVLYFMLFLVLMP).

This sequence belongs to the cytochrome b family. As to quaternary structure, the cytochrome bc1 complex contains 3 respiratory subunits (MT-CYB, CYC1 and UQCRFS1), 2 core proteins (UQCRC1 and UQCRC2) and probably 6 low-molecular weight proteins. Heme b is required as a cofactor.

It is found in the mitochondrion inner membrane. Component of the ubiquinol-cytochrome c reductase complex (complex III or cytochrome b-c1 complex) that is part of the mitochondrial respiratory chain. The b-c1 complex mediates electron transfer from ubiquinol to cytochrome c. Contributes to the generation of a proton gradient across the mitochondrial membrane that is then used for ATP synthesis. The sequence is that of Cytochrome b (mt-cyb) from Anoplogaster cornuta (Common fangtooth).